We begin with the raw amino-acid sequence, 504 residues long: Serine O-succinyltransferase (504 aa).

Residues 1–26 (MLRASSKRLQLSWQVFRRFQSSNPQL) constitute a mitochondrion transit peptide. Residues 49-70 (QACPNSVDPSASITSPSLSSGP) are disordered. Positions 57–70 (PSASITSPSLSSGP) are enriched in low complexity. The AB hydrolase-1 domain maps to 117-395 (NAILLHTGLS…SAEEIIKLNE (279 aa)). The segment at 124 to 127 (GLSA) is important for substrate specificity. Residue serine 221 is the Nucleophile of the active site. Arginine 290 lines the substrate pocket. Residues aspartate 443 and histidine 480 contribute to the active site. Residue aspartate 481 coordinates substrate.

The protein belongs to the AB hydrolase superfamily. MetX family.

The protein localises to the mitochondrion. The enzyme catalyses succinyl-CoA + L-serine = O-succinyl-L-serine + CoA. The protein operates within amino-acid biosynthesis; L-cysteine biosynthesis; L-cysteine from L-serine: step 1/2. Functionally, transfers a succinyl group from succinyl-CoA to L-serine, forming succinyl-L-serine. Also has weak serine acetyl transferase activity and homoserine succinyl transferase activity. This chain is Serine O-succinyltransferase, found in Schizosaccharomyces pombe (strain 972 / ATCC 24843) (Fission yeast).